The following is a 479-amino-acid chain: Lactaldehyde dehydrogenase (479 aa).

Position 150 (Leu150) interacts with NAD(+). Arg161 contributes to the (S)-lactate binding site. NAD(+) is bound by residues 176 to 179 (KPSE), Gln214, and Ser230. A (S)-lactate-binding site is contributed by Glu251. Residues Glu251 and Cys285 contribute to the active site. Asn286 lines the (S)-lactate pocket. Residue Arg336 participates in NAD(+) binding. (S)-lactate-binding residues include Glu443 and His449.

The protein belongs to the aldehyde dehydrogenase family. As to quaternary structure, homotetramer.

It carries out the reaction (S)-lactaldehyde + NAD(+) + H2O = (S)-lactate + NADH + 2 H(+). The enzyme catalyses glycolaldehyde + NAD(+) + H2O = glycolate + NADH + 2 H(+). The protein operates within carbohydrate degradation; L-fucose degradation. It functions in the pathway carbohydrate degradation; L-rhamnose degradation. With respect to regulation, substrate inhibition is very strong with lactaldehyde, diminishing progressively with glycolaldehyde, glyceraldehyde or methylglyoxal. Inhibited by p-hydroxy mercuribenzoate and by some cations, including Mn(2+), Ca(2+), Cu(2+) and Zn(2+). Inhibited by NADH. Its function is as follows. Catalyzes the irreversible oxidation of L-lactaldehyde to L-lactate. Also shows high activity with glycolaldehyde and L-glyceraldehyde. Has weaker activity with various aldehydes such as methylglyoxal, propionaldehyde or benzaldehyde. Involved in the degradation of lactaldehyde produced during metabolism of L-fucose and L-rhamnose. It may be involved in several other metabolic pathways. This chain is Lactaldehyde dehydrogenase (aldA), found in Escherichia coli (strain K12).